Here is a 238-residue protein sequence, read N- to C-terminus: Ribosomal RNA small subunit methyltransferase G (238 aa).

S-adenosyl-L-methionine is bound by residues Gly77, Phe82, 128-129 (AE), and Arg147.

It belongs to the methyltransferase superfamily. RNA methyltransferase RsmG family.

It is found in the cytoplasm. Functionally, specifically methylates the N7 position of guanine in position 535 of 16S rRNA. The protein is Ribosomal RNA small subunit methyltransferase G of Listeria monocytogenes serotype 4b (strain F2365).